Consider the following 101-residue polypeptide: Large ribosomal subunit protein uL24 (101 aa).

The protein belongs to the universal ribosomal protein uL24 family. Part of the 50S ribosomal subunit.

In terms of biological role, one of two assembly initiator proteins, it binds directly to the 5'-end of the 23S rRNA, where it nucleates assembly of the 50S subunit. Functionally, one of the proteins that surrounds the polypeptide exit tunnel on the outside of the subunit. The chain is Large ribosomal subunit protein uL24 from Lactococcus lactis subsp. lactis (strain IL1403) (Streptococcus lactis).